Here is a 165-residue protein sequence, read N- to C-terminus: MSIDVNNESGTEVDEQAILDIARYALARMRIHPLSELSVIVVDTDAMEQLHIQWMDLPGPTDVMSFPMDELRPPAKDDEEPPQGLLGDIVLCPEVAKKQGEEAPTQHSMDEELQLLTVHGVLHLLGYDHEEPDEKAEMFGLQAAIVDGWRGEHGLTGASPAPTVS.

Residues His-119, His-123, and His-129 each coordinate Zn(2+).

Belongs to the endoribonuclease YbeY family. Zn(2+) is required as a cofactor.

It localises to the cytoplasm. Single strand-specific metallo-endoribonuclease involved in late-stage 70S ribosome quality control and in maturation of the 3' terminus of the 16S rRNA. This chain is Endoribonuclease YbeY, found in Streptomyces griseus subsp. griseus (strain JCM 4626 / CBS 651.72 / NBRC 13350 / KCC S-0626 / ISP 5235).